Here is a 424-residue protein sequence, read N- to C-terminus: WD-40 repeat-containing protein MSI3 (424 aa).

N-acetylmethionine is present on methionine 1. WD repeat units lie at residues 167 to 207, 216 to 256, 259 to 299, 303 to 343, and 362 to 402; these read GHEQ…TDKV, GHQS…MQHQ, VHER…APLH, KHEG…DEQL, and GHKA…YRED. The DWD box signature appears at 233 to 249; it reads IFGSAGDDCQLVIWDLR. The interval 394 to 424 is disordered; it reads MAESIYREDDEDEDDDDEGNQNAQHSNENQK. Residues 401–412 show a composition bias toward acidic residues; the sequence is EDDEDEDDDDEG. Residues 413 to 424 are compositionally biased toward polar residues; it reads NQNAQHSNENQK.

Belongs to the WD repeat RBAP46/RBAP48/MSI1 family.

The protein localises to the nucleus. Its function is as follows. Core histone-binding subunit that may target chromatin assembly factors, chromatin remodeling factors and histone deacetylases to their histone substrates in a manner that is regulated by nucleosomal DNA. The protein is WD-40 repeat-containing protein MSI3 (MSI3) of Arabidopsis thaliana (Mouse-ear cress).